Reading from the N-terminus, the 396-residue chain is Acetate kinase (396 aa).

Asn-8 serves as a coordination point for Mg(2+). Residue Lys-15 participates in ATP binding. Arg-89 is a binding site for substrate. Catalysis depends on Asp-146, which acts as the Proton donor/acceptor. Residues 206–210 (HIGNG), 283–285 (DMR), and 331–335 (GVGEN) each bind ATP. Glu-383 lines the Mg(2+) pocket.

Belongs to the acetokinase family. In terms of assembly, homodimer. The cofactor is Mg(2+). Mn(2+) is required as a cofactor.

It localises to the cytoplasm. It catalyses the reaction acetate + ATP = acetyl phosphate + ADP. Its pathway is metabolic intermediate biosynthesis; acetyl-CoA biosynthesis; acetyl-CoA from acetate: step 1/2. Its function is as follows. Catalyzes the formation of acetyl phosphate from acetate and ATP. Can also catalyze the reverse reaction. The polypeptide is Acetate kinase (Streptococcus pneumoniae serotype 2 (strain D39 / NCTC 7466)).